We begin with the raw amino-acid sequence, 275 residues long: MQNITDSWFVQGMIKATSDAWLKGWDERNGGNLTLRLDETDIAPFAANFHEKPRYIALSQPMPLLANTPFIVTGSGKFFRNVQLDPAANLGVVKIDSDGAGYHILWGLTHDAVPTSELPAHFLSHCERIKATHGKDRVIMHCHATNLIALTYVLENNTALITRKLWEGSTECLVVFPDGVGILPWMVPGTDEIGQATAQEMQKHSLVLWPFHGVFGSGPTLDETFGLIDTAEKSAEVLVKIYSMGGMKQTITREELVALGKRFGVTPLASAVALY.

Glu-117 is an active-site residue. Positions 141, 143, and 212 each coordinate Zn(2+).

The protein belongs to the aldolase class II family. RhaD subfamily. As to quaternary structure, homotetramer. Zn(2+) serves as cofactor.

It localises to the cytoplasm. The catalysed reaction is L-rhamnulose 1-phosphate = (S)-lactaldehyde + dihydroxyacetone phosphate. It functions in the pathway carbohydrate degradation; L-rhamnose degradation; glycerone phosphate from L-rhamnose: step 3/3. Functionally, catalyzes the reversible cleavage of L-rhamnulose-1-phosphate to dihydroxyacetone phosphate (DHAP) and L-lactaldehyde. The polypeptide is Rhamnulose-1-phosphate aldolase (Salmonella choleraesuis (strain SC-B67)).